Reading from the N-terminus, the 366-residue chain is Holliday junction branch migration complex subunit RuvB (366 aa).

The segment at 1-50 (MAIISSKKQPPEPNGEPKQRRESAKAPSTENILKPEAAIDEQEQQEEGIR) is disordered. Positions 13 to 210 (PNGEPKQRRE…FGLIQKLRFY (198 aa)) are large ATPase domain (RuvB-L). Residues 15–24 (GEPKQRRESA) are compositionally biased toward basic and acidic residues. ATP is bound by residues Ile49, Arg50, Gly91, Lys94, Thr95, Thr96, 157–159 (EDY), Arg200, Tyr210, and Arg247. Thr95 provides a ligand contact to Mg(2+). Residues 211–281 (EVDELTQIVL…IASEALQLFQ (71 aa)) form a small ATPAse domain (RuvB-S) region. Positions 284 to 366 (PCGLDWTDRQ…TPPNEQLSLL (83 aa)) are head domain (RuvB-H). Positions 339 and 344 each coordinate DNA.

Belongs to the RuvB family. As to quaternary structure, homohexamer. Forms an RuvA(8)-RuvB(12)-Holliday junction (HJ) complex. HJ DNA is sandwiched between 2 RuvA tetramers; dsDNA enters through RuvA and exits via RuvB. An RuvB hexamer assembles on each DNA strand where it exits the tetramer. Each RuvB hexamer is contacted by two RuvA subunits (via domain III) on 2 adjacent RuvB subunits; this complex drives branch migration. In the full resolvosome a probable DNA-RuvA(4)-RuvB(12)-RuvC(2) complex forms which resolves the HJ.

Its subcellular location is the cytoplasm. It carries out the reaction ATP + H2O = ADP + phosphate + H(+). Functionally, the RuvA-RuvB-RuvC complex processes Holliday junction (HJ) DNA during genetic recombination and DNA repair, while the RuvA-RuvB complex plays an important role in the rescue of blocked DNA replication forks via replication fork reversal (RFR). RuvA specifically binds to HJ cruciform DNA, conferring on it an open structure. The RuvB hexamer acts as an ATP-dependent pump, pulling dsDNA into and through the RuvAB complex. RuvB forms 2 homohexamers on either side of HJ DNA bound by 1 or 2 RuvA tetramers; 4 subunits per hexamer contact DNA at a time. Coordinated motions by a converter formed by DNA-disengaged RuvB subunits stimulates ATP hydrolysis and nucleotide exchange. Immobilization of the converter enables RuvB to convert the ATP-contained energy into a lever motion, pulling 2 nucleotides of DNA out of the RuvA tetramer per ATP hydrolyzed, thus driving DNA branch migration. The RuvB motors rotate together with the DNA substrate, which together with the progressing nucleotide cycle form the mechanistic basis for DNA recombination by continuous HJ branch migration. Branch migration allows RuvC to scan DNA until it finds its consensus sequence, where it cleaves and resolves cruciform DNA. This chain is Holliday junction branch migration complex subunit RuvB, found in Nostoc punctiforme (strain ATCC 29133 / PCC 73102).